Reading from the N-terminus, the 283-residue chain is Bifunctional protein FolD (283 aa).

NADP(+)-binding positions include 165–167, Ser-190, and Val-231; that span reads GRS.

The protein belongs to the tetrahydrofolate dehydrogenase/cyclohydrolase family. As to quaternary structure, homodimer.

The catalysed reaction is (6R)-5,10-methylene-5,6,7,8-tetrahydrofolate + NADP(+) = (6R)-5,10-methenyltetrahydrofolate + NADPH. It catalyses the reaction (6R)-5,10-methenyltetrahydrofolate + H2O = (6R)-10-formyltetrahydrofolate + H(+). Its pathway is one-carbon metabolism; tetrahydrofolate interconversion. Catalyzes the oxidation of 5,10-methylenetetrahydrofolate to 5,10-methenyltetrahydrofolate and then the hydrolysis of 5,10-methenyltetrahydrofolate to 10-formyltetrahydrofolate. The protein is Bifunctional protein FolD of Anoxybacillus flavithermus (strain DSM 21510 / WK1).